The following is a 94-amino-acid chain: Aspartyl/glutamyl-tRNA(Asn/Gln) amidotransferase subunit C (94 aa).

This sequence belongs to the GatC family. In terms of assembly, heterotrimer of A, B and C subunits.

The enzyme catalyses L-glutamyl-tRNA(Gln) + L-glutamine + ATP + H2O = L-glutaminyl-tRNA(Gln) + L-glutamate + ADP + phosphate + H(+). It catalyses the reaction L-aspartyl-tRNA(Asn) + L-glutamine + ATP + H2O = L-asparaginyl-tRNA(Asn) + L-glutamate + ADP + phosphate + 2 H(+). In terms of biological role, allows the formation of correctly charged Asn-tRNA(Asn) or Gln-tRNA(Gln) through the transamidation of misacylated Asp-tRNA(Asn) or Glu-tRNA(Gln) in organisms which lack either or both of asparaginyl-tRNA or glutaminyl-tRNA synthetases. The reaction takes place in the presence of glutamine and ATP through an activated phospho-Asp-tRNA(Asn) or phospho-Glu-tRNA(Gln). The protein is Aspartyl/glutamyl-tRNA(Asn/Gln) amidotransferase subunit C of Heliobacterium modesticaldum (strain ATCC 51547 / Ice1).